An 893-amino-acid chain; its full sequence is UPF0182 protein CLK_3152 (893 aa).

The next 7 helical transmembrane spans lie at 9–29 (IPLF…NFII), 49–69 (AIII…WMYY), 94–114 (LFFI…SSSY), 154–174 (VIIS…FILE), 202–222 (LAIV…IKIW), 246–266 (FYKI…LSIV), and 273–293 (VSIC…ASFL).

The protein belongs to the UPF0182 family.

It is found in the cell membrane. This Clostridium botulinum (strain Loch Maree / Type A3) protein is UPF0182 protein CLK_3152.